The primary structure comprises 189 residues: MSKLAEIEALLFVAGEDGLKVHQLAEILSLPPTGVIQSLEKLAEQYEVNPDSSLTLLETSKTYKLVTKPEFAEILRAYSRAPINQSLSRAALETLSIIAYKQPITRVEIDDIRGVNSSGALAKLLAFELVREDGKKEVIGRPNLYVTTDYFLDYMGINHLDELPIVEETELVAEESQLFIERTDIDENQ.

The protein belongs to the ScpB family. Homodimer. Homodimerization may be required to stabilize the binding of ScpA to the Smc head domains. Component of a cohesin-like complex composed of ScpA, ScpB and the Smc homodimer, in which ScpA and ScpB bind to the head domain of Smc. The presence of the three proteins is required for the association of the complex with DNA.

It localises to the cytoplasm. Functionally, participates in chromosomal partition during cell division. May act via the formation of a condensin-like complex containing Smc and ScpA that pull DNA away from mid-cell into both cell halves. The polypeptide is Segregation and condensation protein B (Streptococcus sanguinis (strain SK36)).